The following is a 434-amino-acid chain: Maltoporin (434 aa).

A signal peptide spans 1–25; the sequence is MKMKAKWLPIAAAVTAALASQAAFA.

This sequence belongs to the porin LamB (TC 1.B.3) family. In terms of assembly, homotrimer formed of three 18-stranded antiparallel beta-barrels, containing three independent channels.

The protein localises to the cell outer membrane. The catalysed reaction is beta-maltose(in) = beta-maltose(out). Involved in the transport of maltose and maltodextrins. This chain is Maltoporin, found in Aeromonas hydrophila.